A 569-amino-acid chain; its full sequence is Urease subunit alpha (569 aa).

One can recognise a Urease domain in the interval 131–569; the sequence is GGFDAHIHFI…LPLAQRYFMY (439 aa). Ni(2+) is bound by residues His-136, His-138, and Lys-219. Lys-219 carries the N6-carboxylysine modification. His-221 contacts substrate. Residues His-248 and His-274 each contribute to the Ni(2+) site. Residue His-322 is the Proton donor of the active site. Residue Asp-362 coordinates Ni(2+).

This sequence belongs to the metallo-dependent hydrolases superfamily. Urease alpha subunit family. As to quaternary structure, heterotrimer of UreA (gamma), UreB (beta) and UreC (alpha) subunits. Three heterotrimers associate to form the active enzyme. It depends on Ni cation as a cofactor. In terms of processing, carboxylation allows a single lysine to coordinate two nickel ions.

The protein localises to the cytoplasm. The enzyme catalyses urea + 2 H2O + H(+) = hydrogencarbonate + 2 NH4(+). Its pathway is nitrogen metabolism; urea degradation; CO(2) and NH(3) from urea (urease route): step 1/1. This chain is Urease subunit alpha, found in Jannaschia sp. (strain CCS1).